The following is a 240-amino-acid chain: Thiopurine S-methyltransferase (240 aa).

24 to 35 (WKEKWVTRHISF) is a binding site for S-adenosyl-L-methionine. Phosphoserine is present on S34. Residue F35 coordinates substrate. The residue at position 53 (K53) is an N6-acetyllysine. Residues L64, E85, 129-130 (SI), and R147 contribute to the S-adenosyl-L-methionine site.

The protein belongs to the class I-like SAM-binding methyltransferase superfamily. TPMT family. In terms of assembly, monomer.

It is found in the cytoplasm. The catalysed reaction is S-adenosyl-L-methionine + a thiopurine = S-adenosyl-L-homocysteine + a thiopurine S-methylether.. It catalyses the reaction mercaptopurine + S-adenosyl-L-methionine = 6-methylthiopurine + S-adenosyl-L-homocysteine + H(+). In terms of biological role, catalyzes the S-methylation of thiopurine drugs such as 6-mercaptopurine (also called mercaptopurine, 6-MP or its brand name Purinethol) using S-adenosyl-L-methionine as the methyl donor. TPMT activity modulates the cytotoxic effects of thiopurine prodrugs. A natural substrate for this enzyme has yet to be identified. This chain is Thiopurine S-methyltransferase (Tpmt), found in Mus musculus (Mouse).